The primary structure comprises 119 residues: Ribonuclease P protein component (119 aa).

Belongs to the RnpA family. Consists of a catalytic RNA component (M1 or rnpB) and a protein subunit.

It carries out the reaction Endonucleolytic cleavage of RNA, removing 5'-extranucleotides from tRNA precursor.. Functionally, RNaseP catalyzes the removal of the 5'-leader sequence from pre-tRNA to produce the mature 5'-terminus. It can also cleave other RNA substrates such as 4.5S RNA. The protein component plays an auxiliary but essential role in vivo by binding to the 5'-leader sequence and broadening the substrate specificity of the ribozyme. The polypeptide is Ribonuclease P protein component (Salmonella arizonae (strain ATCC BAA-731 / CDC346-86 / RSK2980)).